The primary structure comprises 410 residues: 3-phenylpropionate/cinnamic acid dioxygenase ferredoxin--NAD(+) reductase component (410 aa).

5-36 is an FAD binding site; that stretch reads TIIIVGGGQAAAMAAASLRQQGFTGELHLFSD. Residue 146–184 participates in NAD(+) binding; it reads SVVIVGAGTIGLELAASATQRSAAQRSAAQRRCKVTVIE.

The protein belongs to the bacterial ring-hydroxylating dioxygenase ferredoxin reductase family. This dioxygenase system consists of four proteins: the two subunits of the hydroxylase component (HcaE and HcaF), a ferredoxin (HcaC) and a ferredoxin reductase (HcaD). FAD is required as a cofactor.

It carries out the reaction 2 reduced [2Fe-2S]-[ferredoxin] + NAD(+) + H(+) = 2 oxidized [2Fe-2S]-[ferredoxin] + NADH. Its pathway is aromatic compound metabolism; 3-phenylpropanoate degradation. Its function is as follows. Part of the multicomponent 3-phenylpropionate dioxygenase, that converts 3-phenylpropionic acid (PP) and cinnamic acid (CI) into 3-phenylpropionate-dihydrodiol (PP-dihydrodiol) and cinnamic acid-dihydrodiol (CI-dihydrodiol), respectively. This chain is 3-phenylpropionate/cinnamic acid dioxygenase ferredoxin--NAD(+) reductase component, found in Shigella flexneri serotype 5b (strain 8401).